Here is a 340-residue protein sequence, read N- to C-terminus: Extracellular matrix protein-binding protein emp (340 aa).

An N-terminal signal peptide occupies residues 1–26 (MKKKLLVLTMSTLFATQIMNSNHAKA).

It localises to the cell surface. In terms of biological role, adhesin that binds to the host cell extracellular matrix proteins fibronectin, fibrinogen, collagen, and vitronectin. This Staphylococcus aureus (strain USA300) protein is Extracellular matrix protein-binding protein emp (emp).